The following is a 187-amino-acid chain: Dirigent protein 6 (187 aa).

Residues 1 to 29 (MAFLVEKQLFKALFSFFLLVLLFSDTVLS) form the signal peptide. C40 and C186 are oxidised to a cystine. N-linked (GlcNAc...) asparagine glycans are attached at residues N59 and N123.

The protein belongs to the plant dirigent protein family. Homodimer. Expressed in roots, cotyledon veins, leaf trichomes, flowers, siliques, and meristems. Present in interfascicular/vascular cambia and developing xylem.

It is found in the secreted. The protein localises to the extracellular space. The protein resides in the apoplast. Functionally, dirigent proteins impart stereoselectivity on the phenoxy radical-coupling reaction, yielding optically active lignans from two molecules of coniferyl alcohol in the biosynthesis of lignans, flavonolignans, and alkaloids and thus plays a central role in plant secondary metabolism. Enantiocomplementary dirigent protein that mediates the laccase-catalyzed enantioselective oxidative phenol coupling of (E)-coniferyl alcohol to (-)-pinoresinol. This Arabidopsis thaliana (Mouse-ear cress) protein is Dirigent protein 6 (DIR6).